We begin with the raw amino-acid sequence, 363 residues long: 5-hydroxytryptamine receptor 1E (363 aa).

The Extracellular portion of the chain corresponds to 1 to 21 (MNITNCTTEASMAIRPKTITE). Asn-2 and Asn-5 each carry an N-linked (GlcNAc...) asparagine glycan. The helical transmembrane segment at 22 to 45 (KMLICMTLVVITTLTTLLNLAVIM) threads the bilayer. The Cytoplasmic segment spans residues 46-59 (AIGTTKKLHQPANY). Residues 60–84 (LICSLAVTDLLVAVLVMPLSIIYIV) form a helical membrane-spanning segment. Topologically, residues 85-92 (MDRWKLGY) are extracellular. The helical transmembrane segment at 93–118 (FLCEVWLSVDMTCCTCSILHLCVIAL) threads the bilayer. Cys-95 and Cys-173 are disulfide-bonded. Serotonin is bound by residues Asp-102 and Cys-106. Residues 119 to 121 (DRY) carry the DRY motif; important for ligand-induced conformation changes motif. Over 119–138 (DRYWAITNAIEYARKRTAKR) the chain is Cytoplasmic. A helical transmembrane segment spans residues 139-157 (AALMILTVWTISIFISMPP). Residues 158 to 179 (LFWRSHRRLSPPPSQCTIQHDH) lie on the Extracellular side of the membrane. A helical transmembrane segment spans residues 180-203 (VIYTIYSTLGAFYIPLTLILILYY). Topologically, residues 204–291 (RIYHAAKSLY…SSTRERKAAR (88 aa)) are cytoplasmic. The chain crosses the membrane as a helical span at residues 292–316 (ILGLILGAFILSWLPFFIKELIVGL). Residues 317–322 (SIYTVS) are Extracellular-facing. The chain crosses the membrane as a helical span at residues 323–345 (SEVADFLTWLGYVNSLINPLLYT). Residues 340–344 (NPLLY) carry the NPxxY motif; important for ligand-induced conformation changes and signaling motif. Topologically, residues 346–363 (SFNEDFKLAFKKLIRCRE) are cytoplasmic.

The protein belongs to the G-protein coupled receptor 1 family.

It is found in the cell membrane. In terms of biological role, G-protein coupled receptor for 5-hydroxytryptamine (serotonin). Also functions as a receptor for various alkaloids and psychoactive substances. Ligand binding causes a conformation change that triggers signaling via guanine nucleotide-binding proteins (G proteins) and modulates the activity of downstream effectors, such as adenylate cyclase. HTR1E is coupled to G(i)/G(o) G alpha proteins and mediates inhibitory neurotransmission by inhibiting adenylate cyclase activity. This is 5-hydroxytryptamine receptor 1E (HTR1E) from Pan troglodytes (Chimpanzee).